Consider the following 174-residue polypeptide: Centrosomal protein 20 (174 aa).

Residues 1-104 are necessary and sufficient for homooligomerization and localization to centrosomes and pericentriolar satellites; sequence MATVAELKAV…AFEESKDNTI (104 aa). The LisH domain maps to 49-81; the sequence is ENLLINELIREYLEFNKYKYTASVLIAESGQPV. Residues 129-174 form a disordered region; it reads GPSLQPSDPSLGRQPSRRKPMDDHLRKEEQKSTNIEDLHVSQAVNR. Ser144 is modified (phosphoserine). Over residues 147–167 the composition is skewed to basic and acidic residues; sequence KPMDDHLRKEEQKSTNIEDLH.

This sequence belongs to the CEP43 family. As to quaternary structure, homooligomer; probably required for localization to centrosomes. Forms a complex with KIAA0753/OFIP and OFD1; within this complex may stabilize the interaction between OFD1 and KIAA0753/OFIP. Interacts with PCM1; this interaction may be mediated by KIAA0753/OFIP. Interacts with PLK1 in later G1, S, G2 and M phases of the cell cycle; this interaction recruits PLK1 to centrosomes. In terms of tissue distribution, widely expressed. Detected in brain, heart, kidney, liver, lung, skeletal muscle, placenta and intestine.

The protein resides in the cytoplasm. The protein localises to the cytoskeleton. It localises to the microtubule organizing center. It is found in the centrosome. Its subcellular location is the centriole. The protein resides in the cell projection. The protein localises to the cilium. It localises to the cilium basal body. It is found in the cytoplasmic granule. Its subcellular location is the centriolar satellite. In terms of biological role, involved in the biogenesis of cilia. Required for the recruitment of PLK1 to centrosomes and S phase progression. In Homo sapiens (Human), this protein is Centrosomal protein 20.